Here is a 204-residue protein sequence, read N- to C-terminus: dITP/XTP pyrophosphatase (204 aa).

8-13 (SRNRKK) serves as a coordination point for substrate. Aspartate 73 (proton acceptor) is an active-site residue. Aspartate 73 contributes to the Mg(2+) binding site. Residues serine 74, 155 to 158 (FGYD), lysine 179, and 184 to 185 (HR) contribute to the substrate site.

The protein belongs to the HAM1 NTPase family. As to quaternary structure, homodimer. Requires Mg(2+) as cofactor.

It catalyses the reaction XTP + H2O = XMP + diphosphate + H(+). It carries out the reaction dITP + H2O = dIMP + diphosphate + H(+). The catalysed reaction is ITP + H2O = IMP + diphosphate + H(+). Pyrophosphatase that catalyzes the hydrolysis of nucleoside triphosphates to their monophosphate derivatives, with a high preference for the non-canonical purine nucleotides XTP (xanthosine triphosphate), dITP (deoxyinosine triphosphate) and ITP. Seems to function as a house-cleaning enzyme that removes non-canonical purine nucleotides from the nucleotide pool, thus preventing their incorporation into DNA/RNA and avoiding chromosomal lesions. This Mycolicibacterium paratuberculosis (strain ATCC BAA-968 / K-10) (Mycobacterium paratuberculosis) protein is dITP/XTP pyrophosphatase.